Reading from the N-terminus, the 1046-residue chain is Toluene efflux pump membrane transporter TtgE (1046 aa).

Helical transmembrane passes span 10-30 (IFAWVLAIIAMLAGALSLTKM), 339-359 (SVVHTILEAVVLVFLVMFLFL), 370-390 (LAVPVVLLAAFALLPYFGISI), 392-412 (VLTMYAMVLAIGLLVDDAIVV), 440-460 (GALVGIGMVLSAVFVPMAFFG), 470-490 (FAVTIVICMSLSVLVALIFTP), 542-562 (LIFALITAGTGYLFTQIPKAF), 871-891 (APMLYALTVLIVFLCLAALYE), 895-915 (VPMSVILVVPLGIFGAVLATL), 927-947 (VGLMTTVGLSAKNAILIIEFA), 973-993 (IIMTSLAFTFGVLPMARATGA), and 1008-1028 (GMITATVLAVFFVPLFYVVVV).

This sequence belongs to the resistance-nodulation-cell division (RND) (TC 2.A.6) family.

It is found in the cell inner membrane. The inner membrane transporter component of an inducible organic solvent efflux pump. Involved in export of toluene and styrene but not of m-xylene, propylbenzene or ethylbenzene. Is not involved in antibiotic or AMP efflux. The sequence is that of Toluene efflux pump membrane transporter TtgE (ttgE) from Pseudomonas putida (strain DOT-T1E).